The primary structure comprises 258 residues: UDP-2,3-diacylglucosamine hydrolase (258 aa).

Residues D15, H17, D48, N88, and H123 each contribute to the Mn(2+) site. N88–R89 contributes to the substrate binding site. Positions 131, 169, 173, 176, and 204 each coordinate substrate. Mn(2+)-binding residues include H204 and H206.

It belongs to the LpxH family. Requires Mn(2+) as cofactor.

The protein resides in the cell inner membrane. It catalyses the reaction UDP-2-N,3-O-bis[(3R)-3-hydroxytetradecanoyl]-alpha-D-glucosamine + H2O = 2-N,3-O-bis[(3R)-3-hydroxytetradecanoyl]-alpha-D-glucosaminyl 1-phosphate + UMP + 2 H(+). It participates in glycolipid biosynthesis; lipid IV(A) biosynthesis; lipid IV(A) from (3R)-3-hydroxytetradecanoyl-[acyl-carrier-protein] and UDP-N-acetyl-alpha-D-glucosamine: step 4/6. In terms of biological role, hydrolyzes the pyrophosphate bond of UDP-2,3-diacylglucosamine to yield 2,3-diacylglucosamine 1-phosphate (lipid X) and UMP by catalyzing the attack of water at the alpha-P atom. Involved in the biosynthesis of lipid A, a phosphorylated glycolipid that anchors the lipopolysaccharide to the outer membrane of the cell. The protein is UDP-2,3-diacylglucosamine hydrolase of Bordetella pertussis (strain Tohama I / ATCC BAA-589 / NCTC 13251).